The primary structure comprises 165 residues: Nucleotide-binding protein A9601_05361 (165 aa).

It belongs to the YajQ family.

Nucleotide-binding protein. This chain is Nucleotide-binding protein A9601_05361, found in Prochlorococcus marinus (strain AS9601).